A 2226-amino-acid polypeptide reads, in one-letter code: DNA polymerase epsilon catalytic subunit A (2226 aa).

The tract at residues 1240 to 1265 is disordered; it reads RVSKVTSRKRRNGKANNVSDSEEEER. The Zn(2+) site is built by Cys2112, Cys2115, Cys2134, and Cys2137. A CysA-type zinc finger spans residues 2112-2137; the sequence is CDYCNYIRDIDFCRDEQKNIWNCSNC. [4Fe-4S] cluster is bound by residues Cys2168, Cys2171, Cys2183, and Cys2185. The short motif at 2168–2185 is the CysB motif element; the sequence is CSKCHQIKSDNMSEYCKC.

Belongs to the DNA polymerase type-B family. As to quaternary structure, heterotetramer. Consists of 4 subunits: POL2, DPB2, DPB3 and DPB4. It depends on [4Fe-4S] cluster as a cofactor.

It localises to the nucleus. The enzyme catalyses DNA(n) + a 2'-deoxyribonucleoside 5'-triphosphate = DNA(n+1) + diphosphate. Its function is as follows. DNA polymerase II participates in chromosomal DNA replication. This chain is DNA polymerase epsilon catalytic subunit A (POL2), found in Debaryomyces hansenii (strain ATCC 36239 / CBS 767 / BCRC 21394 / JCM 1990 / NBRC 0083 / IGC 2968) (Yeast).